The following is a 557-amino-acid chain: Selenoprotein N (557 aa).

The interval 1 to 24 (MGQARPAARRPHSPDPGAQPAPPR) is disordered. An N-terminal signal peptide occupies residues 1–42 (MGQARPAARRPHSPDPGAQPAPPRRRARALALLGALLAAAAA). The region spanning 67–102 (VLGTDGLFLFSSLDTDQDMYISPEEFKPIAEKLTGS) is the EF-hand domain. An N-linked (GlcNAc...) asparagine glycan is attached at asparagine 156. Selenocysteine 428 is a non-standard amino acid (selenocysteine). 2 N-linked (GlcNAc...) asparagine glycosylation sites follow: asparagine 449 and asparagine 497.

Interacts with RYR1, RYR2 and RYR3. N-glycosylated.

It localises to the endoplasmic reticulum membrane. In terms of biological role, plays an important role in cell protection against oxidative stress and in the regulation of redox-related calcium homeostasis. Regulates the calcium level of the ER by protecting the calcium pump ATP2A2 against the oxidoreductase ERO1A-mediated oxidative damage. Within the ER, ERO1A activity increases the concentration of H(2)O(2), which attacks the luminal thiols in ATP2A2 and thus leads to cysteinyl sulfenic acid formation (-SOH) and SEPN1 reduces the SOH back to free thiol (-SH), thus restoring ATP2A2 activity. Acts as a modulator of ryanodine receptor (RyR) activity: protects RyR from oxidation due to increased oxidative stress, or directly controls the RyR redox state, regulating the RyR-mediated calcium mobilization required for normal muscle development and differentiation. Essential for muscle regeneration and satellite cell maintenance in skeletal muscle. This chain is Selenoprotein N, found in Mus musculus (Mouse).